Consider the following 432-residue polypeptide: Adenylosuccinate synthetase (432 aa).

GTP is bound by residues 13 to 19 (GDEGKGK) and 41 to 43 (GHT). Residue Asp-14 is the Proton acceptor of the active site. Mg(2+) is bound by residues Asp-14 and Gly-41. IMP-binding positions include 14–17 (DEGK), 39–42 (NAGH), Thr-130, Arg-144, Gln-225, Thr-240, and Arg-304. His-42 acts as the Proton donor in catalysis. 300 to 306 (STTGRPR) contributes to the substrate binding site. Residues Arg-306, 332–334 (KLD), and 416–418 (STG) each bind GTP.

Belongs to the adenylosuccinate synthetase family. As to quaternary structure, homodimer. It depends on Mg(2+) as a cofactor.

Its subcellular location is the cytoplasm. It carries out the reaction IMP + L-aspartate + GTP = N(6)-(1,2-dicarboxyethyl)-AMP + GDP + phosphate + 2 H(+). The protein operates within purine metabolism; AMP biosynthesis via de novo pathway; AMP from IMP: step 1/2. Its function is as follows. Plays an important role in the de novo pathway of purine nucleotide biosynthesis. Catalyzes the first committed step in the biosynthesis of AMP from IMP. In Nitrosomonas europaea (strain ATCC 19718 / CIP 103999 / KCTC 2705 / NBRC 14298), this protein is Adenylosuccinate synthetase.